A 135-amino-acid polypeptide reads, in one-letter code: uncharacterized protein (135 aa).

This is an uncharacterized protein from Acanthamoeba polyphaga (Amoeba).